The following is a 78-amino-acid chain: Large ribosomal subunit protein bL28 (78 aa).

The protein belongs to the bacterial ribosomal protein bL28 family.

The polypeptide is Large ribosomal subunit protein bL28 (Colwellia psychrerythraea (strain 34H / ATCC BAA-681) (Vibrio psychroerythus)).